Here is a 452-residue protein sequence, read N- to C-terminus: Serine--tRNA ligase (452 aa).

An L-serine-binding site is contributed by 251–253 (TSE). 282–284 (RSE) provides a ligand contact to ATP. Glutamate 305 is an L-serine binding site. Position 369 to 372 (369 to 372 (EISS)) interacts with ATP. Serine 404 is a binding site for L-serine.

The protein belongs to the class-II aminoacyl-tRNA synthetase family. Type-1 seryl-tRNA synthetase subfamily. As to quaternary structure, homodimer. The tRNA molecule binds across the dimer.

The protein localises to the cytoplasm. It carries out the reaction tRNA(Ser) + L-serine + ATP = L-seryl-tRNA(Ser) + AMP + diphosphate + H(+). The enzyme catalyses tRNA(Sec) + L-serine + ATP = L-seryl-tRNA(Sec) + AMP + diphosphate + H(+). It functions in the pathway aminoacyl-tRNA biosynthesis; selenocysteinyl-tRNA(Sec) biosynthesis; L-seryl-tRNA(Sec) from L-serine and tRNA(Sec): step 1/1. Functionally, catalyzes the attachment of serine to tRNA(Ser). Is also able to aminoacylate tRNA(Sec) with serine, to form the misacylated tRNA L-seryl-tRNA(Sec), which will be further converted into selenocysteinyl-tRNA(Sec). This Albidiferax ferrireducens (strain ATCC BAA-621 / DSM 15236 / T118) (Rhodoferax ferrireducens) protein is Serine--tRNA ligase.